The chain runs to 207 residues: Mediator of RNA polymerase II transcription subunit 21 (207 aa).

Residues 37–121 (PHPDVPDAAP…PDSPRTFASR (85 aa)) are disordered. Over residues 65-80 (PVPAQSQASPPAQNPA) the composition is skewed to low complexity. Over residues 84–96 (AGAGTSVGEGGQT) the composition is skewed to gly residues. A compositionally biased stretch (low complexity) spans 97-108 (PGPAAGAGADPN). Residues 146 to 196 (IDSSEAEQEKRIRELEGELRRVEEERELKMRELKRLRRTLENVLRAVETGL) adopt a coiled-coil conformation.

The protein belongs to the Mediator complex subunit 21 family. As to quaternary structure, component of the Mediator complex.

It is found in the nucleus. Functionally, component of the Mediator complex, a coactivator involved in the regulated transcription of nearly all RNA polymerase II-dependent genes. Mediator functions as a bridge to convey information from gene-specific regulatory proteins to the basal RNA polymerase II transcription machinery. Mediator is recruited to promoters by direct interactions with regulatory proteins and serves as a scaffold for the assembly of a functional preinitiation complex with RNA polymerase II and the general transcription factors. This Neosartorya fischeri (strain ATCC 1020 / DSM 3700 / CBS 544.65 / FGSC A1164 / JCM 1740 / NRRL 181 / WB 181) (Aspergillus fischerianus) protein is Mediator of RNA polymerase II transcription subunit 21 (srb7).